A 187-amino-acid polypeptide reads, in one-letter code: Calmodulin-like protein 1 (187 aa).

Ala2 carries the N-acetylalanine modification. EF-hand domains are found at residues 8–43 (EQIG…LGQN), 44–79 (PTEA…KLRD), 81–116 (DSEE…IGER), and 117–152 (LTDE…KKRR). Ca(2+) contacts are provided by Asp21, Asp23, Asp25, Ser27, Glu32, Asp57, Asp59, Asn61, Asn63, Glu68, Asp94, Asp96, Asn98, Glu105, Asp130, Asp132, Asp134, Gln136, and Glu141. The segment at 153–187 (KRIEEKRDHDGGSRTKSAGPSAAPASKRGQKCVIL) is disordered. Over residues 154–165 (RIEEKRDHDGGS) the composition is skewed to basic and acidic residues. Over residues 169–178 (SAGPSAAPAS) the composition is skewed to low complexity. Cys184 bears the Cysteine methyl ester mark. The S-farnesyl cysteine moiety is linked to residue Cys184. The propeptide at 185–187 (VIL) is removed in mature form.

It belongs to the calmodulin family.

It is found in the membrane. In terms of biological role, calcium-binding protein that binds and activates CAMK1, a calcium/calmodulin-dependent kinase. This chain is Calmodulin-like protein 1 (CML1), found in Oryza sativa subsp. japonica (Rice).